The chain runs to 128 residues: Claw keratin (128 aa).

A run of 2 repeats spans residues 83 to 91 (GGYGGLGGY) and 92 to 100 (GGYGGLGGY). The segment at 83 to 104 (GGYGGLGGYGGYGGLGGYGGYG) is 3 X 9 AA tandem repeats, Gly-rich. One copy of the 3; approximate repeat lies at 101–109 (GGYGGFGSC).

The protein belongs to the avian keratin family. As to expression, abundantly expressed in the claw and at a low level in feather tissue.

The sequence is that of Claw keratin (CKER1) from Gallus gallus (Chicken).